Here is a 139-residue protein sequence, read N- to C-terminus: Small ribosomal subunit protein uS12 (139 aa).

A 3-methylthioaspartic acid modification is found at aspartate 102. The disordered stretch occupies residues 116-139 (DTTGVAKRSQGRSKYGAKRPKKSK). A compositionally biased stretch (basic residues) spans 124–139 (SQGRSKYGAKRPKKSK).

It belongs to the universal ribosomal protein uS12 family. In terms of assembly, part of the 30S ribosomal subunit. Contacts proteins S8 and S17. May interact with IF1 in the 30S initiation complex.

Its function is as follows. With S4 and S5 plays an important role in translational accuracy. Interacts with and stabilizes bases of the 16S rRNA that are involved in tRNA selection in the A site and with the mRNA backbone. Located at the interface of the 30S and 50S subunits, it traverses the body of the 30S subunit contacting proteins on the other side and probably holding the rRNA structure together. The combined cluster of proteins S8, S12 and S17 appears to hold together the shoulder and platform of the 30S subunit. This chain is Small ribosomal subunit protein uS12, found in Mesomycoplasma hyopneumoniae (strain 7448) (Mycoplasma hyopneumoniae).